A 558-amino-acid chain; its full sequence is Arginine--tRNA ligase (558 aa).

The 'HIGH' region motif lies at 119-129; the sequence is ANPNGPLHVGH.

The protein belongs to the class-I aminoacyl-tRNA synthetase family.

It is found in the cytoplasm. The catalysed reaction is tRNA(Arg) + L-arginine + ATP = L-arginyl-tRNA(Arg) + AMP + diphosphate. The polypeptide is Arginine--tRNA ligase (Methanoregula boonei (strain DSM 21154 / JCM 14090 / 6A8)).